The sequence spans 247 residues: Putative 2-succinyl-6-hydroxy-2,4-cyclohexadiene-1-carboxylate synthase (247 aa).

The region spanning 4-229 (IIFLHGLLGT…CAGHNSHLEN (226 aa)) is the AB hydrolase-1 domain.

This sequence belongs to the AB hydrolase superfamily. MenH family. In terms of assembly, monomer.

It catalyses the reaction 5-enolpyruvoyl-6-hydroxy-2-succinyl-cyclohex-3-ene-1-carboxylate = (1R,6R)-6-hydroxy-2-succinyl-cyclohexa-2,4-diene-1-carboxylate + pyruvate. The protein operates within quinol/quinone metabolism; 1,4-dihydroxy-2-naphthoate biosynthesis; 1,4-dihydroxy-2-naphthoate from chorismate: step 3/7. Its pathway is quinol/quinone metabolism; menaquinone biosynthesis. Its function is as follows. Catalyzes a proton abstraction reaction that results in 2,5-elimination of pyruvate from 2-succinyl-5-enolpyruvyl-6-hydroxy-3-cyclohexene-1-carboxylate (SEPHCHC) and the formation of 2-succinyl-6-hydroxy-2,4-cyclohexadiene-1-carboxylate (SHCHC). This chain is Putative 2-succinyl-6-hydroxy-2,4-cyclohexadiene-1-carboxylate synthase, found in Haemophilus influenzae (strain ATCC 51907 / DSM 11121 / KW20 / Rd).